The following is a 384-amino-acid chain: Carbamoyl phosphate synthase small chain (384 aa).

The tract at residues 1–195 (MLPVLPPALL…LGRGHGTLAD (195 aa)) is CPSase. Residues Ser50, Gly247, and Gly249 each coordinate L-glutamine. A Glutamine amidotransferase type-1 domain is found at 199 to 384 (HVVAYDFGVK…RFVALMQERA (186 aa)). Cys275 functions as the Nucleophile in the catalytic mechanism. L-glutamine-binding residues include Leu276, Gln279, Asn317, Gly319, and Phe320. Active-site residues include His359 and Glu361.

The protein belongs to the CarA family. Composed of two chains; the small (or glutamine) chain promotes the hydrolysis of glutamine to ammonia, which is used by the large (or ammonia) chain to synthesize carbamoyl phosphate. Tetramer of heterodimers (alpha,beta)4.

The catalysed reaction is hydrogencarbonate + L-glutamine + 2 ATP + H2O = carbamoyl phosphate + L-glutamate + 2 ADP + phosphate + 2 H(+). It catalyses the reaction L-glutamine + H2O = L-glutamate + NH4(+). Its pathway is amino-acid biosynthesis; L-arginine biosynthesis; carbamoyl phosphate from bicarbonate: step 1/1. It participates in pyrimidine metabolism; UMP biosynthesis via de novo pathway; (S)-dihydroorotate from bicarbonate: step 1/3. In terms of biological role, small subunit of the glutamine-dependent carbamoyl phosphate synthetase (CPSase). CPSase catalyzes the formation of carbamoyl phosphate from the ammonia moiety of glutamine, carbonate, and phosphate donated by ATP, constituting the first step of 2 biosynthetic pathways, one leading to arginine and/or urea and the other to pyrimidine nucleotides. The small subunit (glutamine amidotransferase) binds and cleaves glutamine to supply the large subunit with the substrate ammonia. The polypeptide is Carbamoyl phosphate synthase small chain (Rubrivivax gelatinosus (strain NBRC 100245 / IL144)).